Here is a 434-residue protein sequence, read N- to C-terminus: UDP-glucose 6-dehydrogenase (434 aa).

Residues 2–19 (NITF…GIIM), V11, D30, K35, T121, and E152 contribute to the NAD(+) site. Substrate is bound by residues 148–152 (EFLRE), K204, N208, 249–253 (FLNAG), and G257. C260 acts as the Nucleophile in catalysis. K263 provides a ligand contact to NAD(+). A substrate-binding site is contributed by K321. Position 328 (R328) interacts with NAD(+).

Belongs to the UDP-glucose/GDP-mannose dehydrogenase family.

The enzyme catalyses UDP-alpha-D-glucose + 2 NAD(+) + H2O = UDP-alpha-D-glucuronate + 2 NADH + 3 H(+). It functions in the pathway nucleotide-sugar biosynthesis; UDP-alpha-D-glucuronate biosynthesis; UDP-alpha-D-glucuronate from UDP-alpha-D-glucose: step 1/1. The sequence is that of UDP-glucose 6-dehydrogenase (udg) from Rickettsia typhi (strain ATCC VR-144 / Wilmington).